The chain runs to 109 residues: Small ribosomal subunit protein bS6 (109 aa).

Belongs to the bacterial ribosomal protein bS6 family.

In terms of biological role, binds together with bS18 to 16S ribosomal RNA. The protein is Small ribosomal subunit protein bS6 of Ehrlichia chaffeensis (strain ATCC CRL-10679 / Arkansas).